The following is a 66-amino-acid chain: Beta-mammal toxin Cv2 (66 aa).

The 66-residue stretch at 1–66 (KEGYIVNHST…VWPLPKKTCN (66 aa)) folds into the LCN-type CS-alpha/beta domain. Disulfide bonds link cysteine 12/cysteine 65, cysteine 16/cysteine 41, cysteine 25/cysteine 46, and cysteine 29/cysteine 48.

Expressed by the venom gland.

Its subcellular location is the secreted. Its activity is regulated as follows. Is susceptible to be slightly neutralized by human antibodies scFvs 10FG2. In terms of biological role, beta toxins bind voltage-independently at site-4 of sodium channels (Nav) and reduces peak current and shifts the voltage of activation toward more negative potentials thereby affecting sodium channel activation and promoting spontaneous and repetitive firing. This toxin is slightly toxic to mice. In Centruroides villegasi (Scorpion), this protein is Beta-mammal toxin Cv2.